A 60-amino-acid chain; its full sequence is Cytotoxin 2 (60 aa).

4 disulfides stabilise this stretch: C3–C21, C14–C38, C42–C53, and C54–C59.

It belongs to the three-finger toxin family. Short-chain subfamily. Type IA cytotoxin sub-subfamily. In terms of assembly, monomer in solution; Homodimer and oligomer in the presence of negatively charged lipids forming a pore with a size ranging between 20 and 30 Angstroms. Expressed by the venom gland.

Its subcellular location is the secreted. The protein localises to the target cell membrane. Its function is as follows. This three-finger cytotoxin is a basic protein that interacts and penetrates into the cell membrane, with the tips of all the three loops. Cytotoxins which have a Pro-30 (P-type) interacts with membrane stronger that those which have a 'Ser-28' (S-type). CTII interacts with membrane stronger than CTI. This chain is Cytotoxin 2, found in Naja oxiana (Central Asian cobra).